Reading from the N-terminus, the 306-residue chain is tRNA-cytidine(32) 2-sulfurtransferase (306 aa).

The PP-loop motif motif lies at 49–54 (SGGKDS). The [4Fe-4S] cluster site is built by Cys-124, Cys-127, and Cys-215.

Belongs to the TtcA family. Homodimer. Mg(2+) is required as a cofactor. It depends on [4Fe-4S] cluster as a cofactor.

The protein resides in the cytoplasm. It carries out the reaction cytidine(32) in tRNA + S-sulfanyl-L-cysteinyl-[cysteine desulfurase] + AH2 + ATP = 2-thiocytidine(32) in tRNA + L-cysteinyl-[cysteine desulfurase] + A + AMP + diphosphate + H(+). It participates in tRNA modification. Functionally, catalyzes the ATP-dependent 2-thiolation of cytidine in position 32 of tRNA, to form 2-thiocytidine (s(2)C32). The sulfur atoms are provided by the cysteine/cysteine desulfurase (IscS) system. This is tRNA-cytidine(32) 2-sulfurtransferase from Azoarcus sp. (strain BH72).